The chain runs to 137 residues: Large ribosomal subunit protein uL16 (137 aa).

The protein belongs to the universal ribosomal protein uL16 family. Part of the 50S ribosomal subunit.

Its function is as follows. Binds 23S rRNA and is also seen to make contacts with the A and possibly P site tRNAs. The polypeptide is Large ribosomal subunit protein uL16 (Leuconostoc mesenteroides subsp. mesenteroides (strain ATCC 8293 / DSM 20343 / BCRC 11652 / CCM 1803 / JCM 6124 / NCDO 523 / NBRC 100496 / NCIMB 8023 / NCTC 12954 / NRRL B-1118 / 37Y)).